The chain runs to 260 residues: 6-carboxyhexanoate--CoA ligase (260 aa).

It belongs to the BioW family. Homodimer. The cofactor is Mg(2+).

It carries out the reaction heptanedioate + ATP + CoA = 6-carboxyhexanoyl-CoA + AMP + diphosphate. It participates in metabolic intermediate metabolism; pimeloyl-CoA biosynthesis; pimeloyl-CoA from pimelate: step 1/1. In terms of biological role, catalyzes the transformation of pimelate into pimeloyl-CoA with concomitant hydrolysis of ATP to AMP. The sequence is that of 6-carboxyhexanoate--CoA ligase from Fibrobacter succinogenes (strain ATCC 19169 / S85).